A 510-amino-acid chain; its full sequence is MRALLSVSDKEGIVEFAKGLEELDWQILSTGGTYKLLKAEGVKATEVSEFTASPEMFEGRVKTLHPKVHGGILHKRDDATHVAQAKEHGIEGIDLVCVNLYPFKETTIRTDDFAEIIENIDIGGPAMVRSAAKNFKDVLIVTSVLDYDEILKRLKEKSDDYEFRRSLMIKAFEHTAAYDSMIANYMNDRFNGGFGDARFIVGSKVFDTRYGENPHQKGALYEFDYFFTNNFRALKGEASFNNMTDINGALMLATSFDDAPAVAIIKHANPCGFAVKDTLLESYVAALKCDPISAYGGVVAINGTLDEELAKKINEIYVEVIIAANVDDAALKVFESKKRIKIFTQDNKFLVRANDKFDFKHIDGGFVFQERDFVKDEELENMKQMSKKFATGSELKDAQIAWKVAALTKSNCVVYVKDGAMVAIGMGMTSRVDAARAAVAKAKELKIDLSGCVLASEAFFPFRDSIDIASKVGVKCVIEPGGSIRDDEVIEAADEHGMSLYFTGVRHFLH.

An MGS-like domain is found at 1–142 (MRALLSVSDK…KNFKDVLIVT (142 aa)).

This sequence belongs to the PurH family.

The enzyme catalyses (6R)-10-formyltetrahydrofolate + 5-amino-1-(5-phospho-beta-D-ribosyl)imidazole-4-carboxamide = 5-formamido-1-(5-phospho-D-ribosyl)imidazole-4-carboxamide + (6S)-5,6,7,8-tetrahydrofolate. The catalysed reaction is IMP + H2O = 5-formamido-1-(5-phospho-D-ribosyl)imidazole-4-carboxamide. The protein operates within purine metabolism; IMP biosynthesis via de novo pathway; 5-formamido-1-(5-phospho-D-ribosyl)imidazole-4-carboxamide from 5-amino-1-(5-phospho-D-ribosyl)imidazole-4-carboxamide (10-formyl THF route): step 1/1. It participates in purine metabolism; IMP biosynthesis via de novo pathway; IMP from 5-formamido-1-(5-phospho-D-ribosyl)imidazole-4-carboxamide: step 1/1. This Campylobacter concisus (strain 13826) protein is Bifunctional purine biosynthesis protein PurH.